Reading from the N-terminus, the 658-residue chain is uncharacterized protein (658 aa).

A compositionally biased stretch (low complexity) spans 516 to 639 (SSNNSNSSNN…NNNNNSSQGG (124 aa)). The tract at residues 516–646 (SSNNSNSSNN…QGGNSQGGSG (131 aa)) is disordered.

Its subcellular location is the cytoplasm. This is an uncharacterized protein from Schizosaccharomyces pombe (strain 972 / ATCC 24843) (Fission yeast).